The primary structure comprises 1026 residues: UPF0182 protein FRAAL6027 (1026 aa).

7 helical membrane passes run 13 to 33 (AKVIVPVLLAVALVIAFVAIF), 60 to 80 (ILLFLIFGAVMAVVIGTNIVL), 108 to 128 (YMKLVLVAVAAVFGLAAGLSA), 167 to 187 (FLLGFLLTAVLLSLLVTVLTH), 208 to 228 (AHISVLLGLLALLKAWAYYLD), 250 to 270 (AVLPAKLILLFISLACAVLFI), and 283 to 303 (LGAGILVLSSVVIGGIYPAFI). Low complexity predominate over residues 877–888 (AAAGAGTGATTT). 2 disordered regions span residues 877-916 (AAAGAGTGATTTTGGGGQATTQGGGTGAAPPGGTSGLQDA) and 958-1026 (LASP…PPPG). Over residues 889–903 (TGGGGQATTQGGGTG) the composition is skewed to gly residues. Residues 970 to 1001 (PTPSRSAAPTTRGTAAGSAPPGTTPAVAAPAG) are compositionally biased toward low complexity. Over residues 1016-1026 (PQQPRAAPPPG) the composition is skewed to pro residues.

Belongs to the UPF0182 family.

It is found in the cell membrane. The chain is UPF0182 protein FRAAL6027 from Frankia alni (strain DSM 45986 / CECT 9034 / ACN14a).